The chain runs to 303 residues: uncharacterized protein (303 aa).

Disordered regions lie at residues 1 to 89 (MTSP…NVRS) and 132 to 159 (SELPDLSGPVQRTVPCKPSPDRGSSTPR). Residues 61-89 (RASQSGYRPSDPLTTTRQSNPAPGANVRS) are compositionally biased toward polar residues. The next 2 helical transmembrane spans lie at 205 to 225 (LLLSVALFFVWMIAVAFLYLL) and 264 to 284 (VLVGLVNIVLMTTMAAIAAFV).

The protein to M.tuberculosis Rv0007.

It is found in the cell membrane. This is an uncharacterized protein from Mycobacterium leprae (strain TN).